Here is a 213-residue protein sequence, read N- to C-terminus: RNA chaperone ProQ (213 aa).

Residues 105–150 form a disordered region; the sequence is ESQEKAKAKRAAQTPKAAPAGKAPAKKAPKKVAVPARKTERPAKAA. The segment covering 115-127 has biased composition (low complexity); sequence AAQTPKAAPAGKA.

The protein belongs to the ProQ family.

Its subcellular location is the cytoplasm. Functionally, RNA chaperone with significant RNA binding, RNA strand exchange and RNA duplexing activities. The chain is RNA chaperone ProQ from Shewanella oneidensis (strain ATCC 700550 / JCM 31522 / CIP 106686 / LMG 19005 / NCIMB 14063 / MR-1).